Reading from the N-terminus, the 85-residue chain is Large ribosomal subunit protein bL27 (85 aa).

The tract at residues 1 to 20 (MAHKKAGGSTRNGRDSEAKR) is disordered.

The protein belongs to the bacterial ribosomal protein bL27 family.

The sequence is that of Large ribosomal subunit protein bL27 from Klebsiella pneumoniae (strain 342).